The following is a 171-amino-acid chain: Methylated-DNA--protein-cysteine methyltransferase (171 aa).

Cys-139 functions as the Nucleophile; methyl group acceptor in the catalytic mechanism.

This sequence belongs to the MGMT family.

It localises to the cytoplasm. The enzyme catalyses a 6-O-methyl-2'-deoxyguanosine in DNA + L-cysteinyl-[protein] = S-methyl-L-cysteinyl-[protein] + a 2'-deoxyguanosine in DNA. It catalyses the reaction a 4-O-methyl-thymidine in DNA + L-cysteinyl-[protein] = a thymidine in DNA + S-methyl-L-cysteinyl-[protein]. Functionally, involved in the cellular defense against the biological effects of O6-methylguanine (O6-MeG) and O4-methylthymine (O4-MeT) in DNA. Repairs the methylated nucleobase in DNA by stoichiometrically transferring the methyl group to a cysteine residue in the enzyme. This is a suicide reaction: the enzyme is irreversibly inactivated. The protein is Methylated-DNA--protein-cysteine methyltransferase of Salmonella typhi.